Reading from the N-terminus, the 294-residue chain is Acetyl-coenzyme A carboxylase carboxyl transferase subunit beta (294 aa).

The region spanning 30 to 294 is the CoA carboxyltransferase N-terminal domain; the sequence is IMTKCPECKK…PETGGESDGE (265 aa). 4 residues coordinate Zn(2+): cysteine 34, cysteine 37, cysteine 53, and cysteine 56. The C4-type zinc finger occupies 34–56; that stretch reads CPECKKIMYTKELQKNLMVCNYC.

The protein belongs to the AccD/PCCB family. As to quaternary structure, acetyl-CoA carboxylase is a heterohexamer composed of biotin carboxyl carrier protein (AccB), biotin carboxylase (AccC) and two subunits each of ACCase subunit alpha (AccA) and ACCase subunit beta (AccD). It depends on Zn(2+) as a cofactor.

Its subcellular location is the cytoplasm. It catalyses the reaction N(6)-carboxybiotinyl-L-lysyl-[protein] + acetyl-CoA = N(6)-biotinyl-L-lysyl-[protein] + malonyl-CoA. It functions in the pathway lipid metabolism; malonyl-CoA biosynthesis; malonyl-CoA from acetyl-CoA: step 1/1. Its function is as follows. Component of the acetyl coenzyme A carboxylase (ACC) complex. Biotin carboxylase (BC) catalyzes the carboxylation of biotin on its carrier protein (BCCP) and then the CO(2) group is transferred by the transcarboxylase to acetyl-CoA to form malonyl-CoA. This Listeria welshimeri serovar 6b (strain ATCC 35897 / DSM 20650 / CCUG 15529 / CIP 8149 / NCTC 11857 / SLCC 5334 / V8) protein is Acetyl-coenzyme A carboxylase carboxyl transferase subunit beta.